The sequence spans 222 residues: MATKPKLHYPNGRGRMESVRWVLAAAGVEFDEEFLETKEQLQKLQDGNHLLFQQVPMVEIDGMKLVQTRSILHYIADKHHLFGKDLKERTLIDMYVEGTLDLLELLIMHPFLKPDDQQKEVANMAQKAIIRYFPVFEKVLRGHGQRFLVGNQLSLADIILLQTILALEEKIPNILSAFPHLQEYTVKISNIPTIKKFLEPGSKKKPPPDDIYVRTVYNIFMP.

N-acetylmethionine is present on Met-1. The GST N-terminal domain occupies 3-83; it reads TKPKLHYPNG…YIADKHHLFG (81 aa). Residues Tyr-9, 54 to 55, and 67 to 68 each bind glutathione; these read QV and QT. A GST C-terminal domain is found at 85–208; the sequence is DLKERTLIDM…EPGSKKKPPP (124 aa).

This sequence belongs to the GST superfamily. Alpha family. As to quaternary structure, homodimer.

The protein resides in the cytoplasm. The catalysed reaction is RX + glutathione = an S-substituted glutathione + a halide anion + H(+). In terms of biological role, conjugation of reduced glutathione to a wide number of exogenous and endogenous hydrophobic electrophiles. The chain is Glutathione S-transferase A4 (GSTA4) from Bos taurus (Bovine).